The sequence spans 176 residues: Large ribosomal subunit protein uL10 (176 aa).

The protein belongs to the universal ribosomal protein uL10 family. In terms of assembly, part of the ribosomal stalk of the 50S ribosomal subunit. The N-terminus interacts with L11 and the large rRNA to form the base of the stalk. The C-terminus forms an elongated spine to which L12 dimers bind in a sequential fashion forming a multimeric L10(L12)X complex.

Its function is as follows. Forms part of the ribosomal stalk, playing a central role in the interaction of the ribosome with GTP-bound translation factors. The protein is Large ribosomal subunit protein uL10 of Hahella chejuensis (strain KCTC 2396).